Consider the following 561-residue polypeptide: Asparagine synthetase [glutamine-hydrolyzing] (561 aa).

Cys2 serves as the catalytic For GATase activity. Residues 2-191 (CGIWALFGSD…PGHYEVLDLK (190 aa)) enclose the Glutamine amidotransferase type-2 domain. L-glutamine is bound by residues 49–53 (RLAVV), 75–77 (NGE), and Asp97. Residues 213–536 (HALYDGVEKL…PGRADWLPHY (324 aa)) form the Asparagine synthetase domain. ATP-binding positions include Leu256, Ile288, and 363 to 364 (SG). N6-acetyllysine is present on Lys385. Thr545 bears the Phosphothreonine mark.

The enzyme catalyses L-aspartate + L-glutamine + ATP + H2O = L-asparagine + L-glutamate + AMP + diphosphate + H(+). It functions in the pathway amino-acid biosynthesis; L-asparagine biosynthesis; L-asparagine from L-aspartate (L-Gln route): step 1/1. In Bos taurus (Bovine), this protein is Asparagine synthetase [glutamine-hydrolyzing] (ASNS).